The primary structure comprises 640 residues: RNA polymerase II elongation factor ELL2 (640 aa).

Disordered stretches follow at residues 172-202, 290-320, and 343-490; these read AVSDTVPERKRSTPMNPANTIRKTHSSSTIS, KLNPSQNAAGTSRSESPVCSSRDAVSSPQKR, and RVPP…EEDL. 2 stretches are compositionally biased toward polar residues: residues 184 to 202 and 291 to 318; these read TPMNPANTIRKTHSSSTIS and LNPSQNAAGTSRSESPVCSSRDAVSSPQ. Over residues 360–372 the composition is skewed to low complexity; that stretch reads AAGLPLPPAAAAI. The segment covering 391–401 has biased composition (polar residues); the sequence is IVNSNSNSPST. Over residues 457-470 the composition is skewed to basic residues; sequence MSHKKSKKKSKKHK. Positions 471–490 are enriched in basic and acidic residues; that stretch reads EKDQIKKHDIETIEEKEEDL. 2 positions are modified to phosphoserine: S503 and S580. Residues 526–636 enclose the OCEL domain; that stretch reads PDYLIKYIAI…LIGEFDQQQA (111 aa).

This sequence belongs to the ELL/occludin family. Component of the super elongation complex (SEC), at least composed of EAF1, EAF2, CDK9, MLLT3/AF9, AFF (AFF1 or AFF4), the P-TEFb complex and ELL (ELL, ELL2 or ELL3). Component of the little elongation complex (LEC), at least composed of ELL (ELL, ELL2 or ELL3), ZC3H8, ICE1 and ICE2. Interacts with AFF4; the interaction is direct and leads to stabilize ELL2 and prevent ELL2 ubiquitination. Interacts with EAF1 and EAF2. Post-translationally, ubiquitinated by SIAH1, leading to its degradation by the proteasome. Interaction with AFF4 stabilizes ELL2 and prevents ELL2 ubiquitination.

It localises to the nucleus. Its function is as follows. Elongation factor component of the super elongation complex (SEC), a complex required to increase the catalytic rate of RNA polymerase II transcription by suppressing transient pausing by the polymerase at multiple sites along the DNA. Component of the little elongation complex (LEC), a complex required to regulate small nuclear RNA (snRNA) gene transcription by RNA polymerase II and III. Plays a role in immunoglobulin secretion in plasma cells: directs efficient alternative mRNA processing, influencing both proximal poly(A) site choice and exon skipping, as well as immunoglobulin heavy chain (IgH) alternative processing. Probably acts by regulating histone modifications accompanying transition from membrane-specific to secretory IgH mRNA expression. This is RNA polymerase II elongation factor ELL2 (ELL2) from Homo sapiens (Human).